Reading from the N-terminus, the 875-residue chain is Cytosolic phospholipase A2 epsilon (875 aa).

Residues 16-70 (THASEGHHGLGTSMLVPKNPQGEEDSKLGRNCSGFEDAQDPQTAVPSSPLLSMAS) form a disordered region. The C2 domain occupies 60-183 (VPSSPLLSMA…CLRNKTHVKF (124 aa)). Residues 61-70 (PSSPLLSMAS) show a composition bias toward low complexity. The Ca(2+) site is built by D97, D103, D153, D155, and D161. Residues 332-875 (PCSDTLDVRL…KKRMRSQCPS (544 aa)) enclose the PLA2c domain. Catalysis depends on S420, which acts as the Nucleophile. D708 (proton acceptor) is an active-site residue. S808 is subject to Phosphoserine. The required for localization at membrane structures stretch occupies residues 865-875 (EKKRMRSQCPS).

It depends on Ca(2+) as a cofactor. As to expression, predominantly expressed in brain, heart, skeletal muscle, testis and thyroid. Expressed in neurons but not astrocytes or microglia. Expressed at lower level in stomach.

The protein resides in the cytoplasm. It is found in the cytosol. It localises to the early endosome membrane. Its subcellular location is the lysosome membrane. The protein localises to the cell membrane. The enzyme catalyses a 1,2-diacyl-sn-glycero-3-phosphoethanolamine + a 1,2-diacyl-sn-glycero-3-phosphocholine = an N-acyl-1,2-diacyl-sn-glycero-3-phosphoethanolamine + a 2-acyl-sn-glycero-3-phosphocholine + H(+). The catalysed reaction is 1-hexadecanoyl-2-octadecanoyl-sn-glycero-3-phosphocholine + 1,2-di-(9Z-octadecenoyl)-sn-glycero-3-phosphoethanolamine = 2-octadecanoyl-sn-glycero-3-phosphocholine + N-hexadecanoyl-1,2-di-(9Z-octadecenoyl)-sn-glycero-3-phosphoethanolamine + H(+). It carries out the reaction 1-octadecanoyl-2-hexadecanoyl-sn-glycero-3-phosphocholine + 1,2-di-(9Z-octadecenoyl)-sn-glycero-3-phosphoethanolamine = N-octadecanoyl-1,2-di-(9Z-octadecenoyl)-sn-glycero-3-phosphoethanolamine + 2-hexadecanoyl-sn-glycero-3-phosphocholine + H(+). It catalyses the reaction 1,2-di-(9Z-octadecenoyl)-sn-glycero-3-phosphoethanolamine + 1,2-dihexadecanoyl-sn-glycero-3-phosphocholine = N-hexadecanoyl-1,2-di-(9Z-octadecenoyl)-sn-glycero-3-phosphoethanolamine + 2-hexadecanoyl-sn-glycero-3-phosphocholine + H(+). The enzyme catalyses 1,2-di-(5Z,8Z,11Z,14Z-eicosatetraenoyl)-sn-glycero-3-phosphocholine + 1,2-di-(9Z-octadecenoyl)-sn-glycero-3-phosphoethanolamine = N-(5Z,8Z,11Z,14Z-eicosatetraenoyl)-1,2-di-(9Z-octadecenoyl)-sn-glycero-3-phosphoethanolamine + 2-(5Z,8Z,11Z,14Z)-eicosatetraenoyl-sn-glycero-3-phosphocholine + H(+). The catalysed reaction is 2 1,2-di-(9Z-octadecenoyl)-sn-glycero-3-phosphoethanolamine = N,1,2-tri-(9Z-octadecenoyl)-sn-glycero-3-phosphoethanolamine + 2-(9Z-octadecenoyl)-sn-glycero-3-phosphoethanolamine + H(+). It carries out the reaction a 1,2-diacyl-sn-glycero-3-phosphocholine + H2O = a 1-acyl-sn-glycero-3-phosphocholine + a fatty acid + H(+). It catalyses the reaction 1-(1Z-octadecenyl)-2-(9Z-octadecenoyl)-sn-glycero-3-phosphoethanolamine + 1,2-dihexadecanoyl-sn-glycero-3-phosphocholine = 1-O-(1Z-octadecenoyl)-2-(9Z-octadecenoyl)-sn-glycero-3-phospho-N-hexadecanoyl-ethanolamine + 2-hexadecanoyl-sn-glycero-3-phosphocholine + H(+). The enzyme catalyses 1-hexadecanoyl-2-(5Z,8Z,11Z,14Z-eicosatetraenoyl)-sn-glycero-3-phosphocholine + H2O = 1-hexadecanoyl-sn-glycero-3-phosphocholine + (5Z,8Z,11Z,14Z)-eicosatetraenoate + H(+). The catalysed reaction is 1-hexadecanoyl-sn-glycero-3-phosphocholine + H2O = sn-glycerol 3-phosphocholine + hexadecanoate + H(+). With respect to regulation, stimulated by cytosolic Ca(2+). Stimulated by anionic phospholipids such as phosphatidylserine. Its function is as follows. Calcium-dependent N-acyltransferase involved in the biosynthesis of N-acyl ethanolamines (NAEs) in the brain. Transfers the sn-1 fatty acyl chain of phosphatidylcholine (fatty acyl donor) to the amine group of phosphatidylethanolamine (fatty acyl acceptor) to generate N-acyl phosphatidylethanolamine (NAPE). Similarly can use plasmenylethanolamine as a fatty acyl acceptor to form N-acyl plasmenylethanolamine (N-Acyl-PlsEt). Both NAPE and N-Acyl-PlsEt can serve as precursors of bioactive NAEs like N-arachidonoyl phosphatidylethanolamine also called anandamide. Has weak phospholipase A2 and lysophospholipase activities. Regulates intracellular membrane trafficking that requires modulation of membrane curvature as it occurs by enrichment in lysophospholipids. Promotes tubule formation involved in clathrin-independent endocytotic trafficking and cargo recycling. This is Cytosolic phospholipase A2 epsilon (Pla2g4e) from Mus musculus (Mouse).